The primary structure comprises 465 residues: MAP kinase-interacting serine/threonine-protein kinase 2 (465 aa).

Positions 23–72 are disordered; the sequence is ELAFSLDQPDHGDSDFGLQCSARPDMPASQPIDIPDAKKRGKKKKRGRAT. Residues 60 to 66 carry the Nuclear localization signal motif; the sequence is KKRGKKK. Phosphoserine is present on Ser-74. Residues 84-388 enclose the Protein kinase domain; that stretch reads QLQEDVLGEG…TPMVLQRNSC (305 aa). ATP-binding positions include 90 to 98 and Lys-113; that span reads LGEGAHARV. 160–162 lines the staurosporine pocket; the sequence is EKM. Asp-205 functions as the Proton acceptor in the catalytic mechanism. Glu-209 is a staurosporine binding site. Residues Thr-244 and Thr-249 each carry the phosphothreonine modification. 3 residues coordinate Zn(2+): Cys-299, Cys-311, and Cys-314. Position 379 is a phosphothreonine (Thr-379). Phosphoserine is present on residues Ser-437 and Ser-440. The MAP kinase binding motif lies at 444–448; sequence LAQRR. The residue at position 452 (Ser-452) is a Phosphoserine.

The protein belongs to the protein kinase superfamily. CAMK Ser/Thr protein kinase family. In terms of assembly, monomer. Interacts with the C-terminal regions of EIF4G1 and EIF4G2; this interaction is promoted when MAPK pathways are repressed but repressed upon ERK proteins activation. Also binds to dephosphorylated MAPK3/ERK1 and MAPK1/ERK2. Isoform 1 interaction with phosphorylated MAPK3/ERK1 and MAPK1/ERK2 protects it from dephosphorylation and inactivation. Isoform 2 interacts with ESR2 and EIF4E in the nucleus. Requires Mg(2+) as cofactor. It depends on Zn(2+) as a cofactor. In terms of processing, dual phosphorylation of Thr-244 and Thr-249 activates the kinase. Phosphorylation of Thr-379 activates the kinase. Phosphorylated upon arsenic trioxide As(2)O(3) treatment. Phosphorylated by MAPK1/ERK2, MAPK11 and MAPK14. Dephosphorylated by PP2A. In terms of tissue distribution, ubiquitously expressed in all tissues examined. Isoform 2 is expressed at higher levels in the ovary than is isoform 1.

The protein resides in the nucleus. It is found in the PML body. Its subcellular location is the cytoplasm. It carries out the reaction L-seryl-[protein] + ATP = O-phospho-L-seryl-[protein] + ADP + H(+). It catalyses the reaction L-threonyl-[protein] + ATP = O-phospho-L-threonyl-[protein] + ADP + H(+). Inhibited by CGP57380 and staurosporine. Activated by phosphorylation in a negative-feedback regulatory manner in response to chemotherapy (e.g. cytarabine) and thus impairs the generation of antileukemic responses. Its function is as follows. Serine/threonine-protein kinase that phosphorylates SFPQ/PSF, HNRNPA1 and EIF4E. May play a role in the response to environmental stress and cytokines. Appears to regulate translation by phosphorylating EIF4E, thus increasing the affinity of this protein for the 7-methylguanosine-containing mRNA cap. Required for mediating PP2A-inhibition-induced EIF4E phosphorylation. Triggers EIF4E shuttling from cytoplasm to nucleus. Isoform 1 displays a high basal kinase activity, but isoform 2 exhibits a very low kinase activity. Acts as a mediator of the suppressive effects of IFNgamma on hematopoiesis. Negative regulator for signals that control generation of arsenic trioxide As(2)O(3)-dependent apoptosis and anti-leukemic responses. Involved in anti-apoptotic signaling in response to serum withdrawal. The polypeptide is MAP kinase-interacting serine/threonine-protein kinase 2 (MKNK2) (Homo sapiens (Human)).